A 438-amino-acid polypeptide reads, in one-letter code: GTPase Der (438 aa).

EngA-type G domains are found at residues 4–168 and 177–352; these read PIVA…PEGN and IRIA…GNYC. Residues 10–17, 57–61, 120–123, 183–190, 230–234, and 295–298 contribute to the GTP site; these read GRPNVGKS, DTGGI, NKID, DTAGL, and NKWD. The KH-like domain maps to 353–437; that stretch reads KRIKTGILND…GIKLEFRERK (85 aa).

It belongs to the TRAFAC class TrmE-Era-EngA-EngB-Septin-like GTPase superfamily. EngA (Der) GTPase family. As to quaternary structure, associates with the 50S ribosomal subunit.

GTPase that plays an essential role in the late steps of ribosome biogenesis. The protein is GTPase Der of Clostridium novyi (strain NT).